The primary structure comprises 319 residues: Curved DNA-binding protein (319 aa).

One can recognise a J domain in the interval 5–69 (DYYKILGVEP…QKRAEFDEIR (65 aa)).

Its subcellular location is the cytoplasm. The protein localises to the nucleoid. Functionally, DNA-binding protein that preferentially recognizes a curved DNA sequence. It is probably a functional analog of DnaJ; displays overlapping activities with DnaJ, but functions under different conditions, probably acting as a molecular chaperone in an adaptive response to environmental stresses other than heat shock. Lacks autonomous chaperone activity; binds native substrates and targets them for recognition by DnaK. Its activity is inhibited by the binding of CbpM. This chain is Curved DNA-binding protein, found in Pseudomonas putida (strain ATCC 47054 / DSM 6125 / CFBP 8728 / NCIMB 11950 / KT2440).